The following is a 165-amino-acid chain: Large ribosomal subunit protein uL10 (165 aa).

This sequence belongs to the universal ribosomal protein uL10 family. In terms of assembly, part of the ribosomal stalk of the 50S ribosomal subunit. The N-terminus interacts with L11 and the large rRNA to form the base of the stalk. The C-terminus forms an elongated spine to which L12 dimers bind in a sequential fashion forming a multimeric L10(L12)X complex.

In terms of biological role, forms part of the ribosomal stalk, playing a central role in the interaction of the ribosome with GTP-bound translation factors. In Mycoplasma capricolum subsp. capricolum (strain California kid / ATCC 27343 / NCTC 10154), this protein is Large ribosomal subunit protein uL10.